Reading from the N-terminus, the 488-residue chain is Lysine--tRNA ligase (488 aa).

Mg(2+) contacts are provided by Glu-397 and Glu-404.

This sequence belongs to the class-II aminoacyl-tRNA synthetase family. As to quaternary structure, homodimer. Mg(2+) serves as cofactor.

Its subcellular location is the cytoplasm. The enzyme catalyses tRNA(Lys) + L-lysine + ATP = L-lysyl-tRNA(Lys) + AMP + diphosphate. The polypeptide is Lysine--tRNA ligase (lysS) (Mycoplasmopsis fermentans (strain ATCC 19989 / NBRC 14854 / NCTC 10117 / PG18) (Mycoplasma fermentans)).